A 505-amino-acid polypeptide reads, in one-letter code: Photosystem II CP47 reaction center protein (505 aa).

Over 1-19 (GLPWYRVHTVLINDPGRLI) the chain is Cytoplasmic. Chlorophyll a contacts are provided by histidine 8, histidine 22, histidine 25, histidine 99, and histidine 113. The helical transmembrane segment at 20–35 (AAHLMHTALVAGWAGS) threads the bilayer. At 36 to 99 (MALYELATFD…WSFEGVALAH (64 aa)) the chain is on the lumenal side. Residues 100 to 114 (IVLSGLLFLAACWHW) form a helical membrane-spanning segment. At 115–138 (VYWDLELFRDPRTGEPALDLPKMF) the chain is on the cytoplasmic side. A helical transmembrane segment spans residues 139–155 (GIHLFLAGLLCFGFGAF). Residues histidine 141, histidine 156, histidine 200, histidine 201, and histidine 215 each coordinate chlorophyll a. Residues 156–201 (HLTGLFGPGMWVSDPYGLTGSVQPVAPEWGPDGFNPYNPGGVVAHH) are Lumenal-facing. A helical membrane pass occupies residues 202 to 217 (IAAGIVGIIAGLFHIL). Over 218 to 235 (VRPPQRLYKALRMGNIET) the chain is Cytoplasmic. Residues 236 to 251 (VLSSSIAAVFFAAFVV) form a helical membrane-spanning segment. Residues 252-455 (AGTMWYGSAT…PRGWFTFAHA (204 aa)) are Lumenal-facing. Positions 454, 465, and 468 each coordinate chlorophyll a. The helical transmembrane segment at 456-471 (VFALLFFFGHIWHGAR) threads the bilayer. Residues 472–505 (TLFRDVFSGIDPELSPEQVEWGFYQKVGDVTTRK) are Cytoplasmic-facing.

This sequence belongs to the PsbB/PsbC family. PsbB subfamily. In terms of assembly, PSII is composed of 1 copy each of membrane proteins PsbA, PsbB, PsbC, PsbD, PsbE, PsbF, PsbH, PsbI, PsbJ, PsbK, PsbL, PsbM, PsbT, PsbX, PsbY, PsbZ, Psb30/Ycf12, peripheral proteins PsbO, CyanoQ (PsbQ), PsbU, PsbV and a large number of cofactors. It forms dimeric complexes. Binds multiple chlorophylls. PSII binds additional chlorophylls, carotenoids and specific lipids. serves as cofactor.

The protein resides in the cellular thylakoid membrane. One of the components of the core complex of photosystem II (PSII). It binds chlorophyll and helps catalyze the primary light-induced photochemical processes of PSII. PSII is a light-driven water:plastoquinone oxidoreductase, using light energy to abstract electrons from H(2)O, generating O(2) and a proton gradient subsequently used for ATP formation. This Thermostichus vulcanus (Synechococcus vulcanus) protein is Photosystem II CP47 reaction center protein.